The sequence spans 266 residues: Putative carbamate hydrolase RutD (266 aa).

Belongs to the AB hydrolase superfamily. Hydrolase RutD family.

The enzyme catalyses carbamate + 2 H(+) = NH4(+) + CO2. Involved in pyrimidine catabolism. May facilitate the hydrolysis of carbamate, a reaction that can also occur spontaneously. In Escherichia coli O45:K1 (strain S88 / ExPEC), this protein is Putative carbamate hydrolase RutD.